Here is a 448-residue protein sequence, read N- to C-terminus: Glutamate--tRNA ligase (448 aa).

The 'HIGH' region motif lies at 10–20; sequence PSPTGFLHIGN. The 'KMSKS' region signature appears at 214 to 218; that stretch reads KLSKR. Residue Lys217 participates in ATP binding.

It belongs to the class-I aminoacyl-tRNA synthetase family. Glutamate--tRNA ligase type 1 subfamily. In terms of assembly, monomer.

The protein localises to the cytoplasm. The catalysed reaction is tRNA(Glu) + L-glutamate + ATP = L-glutamyl-tRNA(Glu) + AMP + diphosphate. Catalyzes the attachment of glutamate to tRNA(Glu) in a two-step reaction: glutamate is first activated by ATP to form Glu-AMP and then transferred to the acceptor end of tRNA(Glu). This is Glutamate--tRNA ligase from Phytoplasma australiense.